We begin with the raw amino-acid sequence, 307 residues long: Acetyl-coenzyme A carboxylase carboxyl transferase subunit beta (307 aa).

The CoA carboxyltransferase N-terminal domain occupies 25–294 (LWIKDPESGE…TEENGSRRLP (270 aa)).

The protein belongs to the AccD/PCCB family. In terms of assembly, acetyl-CoA carboxylase is a heterohexamer composed of biotin carboxyl carrier protein (AccB), biotin carboxylase (AccC) and two subunits each of ACCase subunit alpha (AccA) and ACCase subunit beta (AccD).

It localises to the cytoplasm. It catalyses the reaction N(6)-carboxybiotinyl-L-lysyl-[protein] + acetyl-CoA = N(6)-biotinyl-L-lysyl-[protein] + malonyl-CoA. Its pathway is lipid metabolism; malonyl-CoA biosynthesis; malonyl-CoA from acetyl-CoA: step 1/1. Component of the acetyl coenzyme A carboxylase (ACC) complex. Biotin carboxylase (BC) catalyzes the carboxylation of biotin on its carrier protein (BCCP) and then the CO(2) group is transferred by the transcarboxylase to acetyl-CoA to form malonyl-CoA. The chain is Acetyl-coenzyme A carboxylase carboxyl transferase subunit beta from Chelativorans sp. (strain BNC1).